The following is a 230-amino-acid chain: Ribose-5-phosphate isomerase A (230 aa).

Substrate-binding positions include T32–T35, D85–D88, and K98–G101. The Proton acceptor role is filled by E107. Residue K125 participates in substrate binding.

The protein belongs to the ribose 5-phosphate isomerase family. Homodimer.

It carries out the reaction aldehydo-D-ribose 5-phosphate = D-ribulose 5-phosphate. Its pathway is carbohydrate degradation; pentose phosphate pathway; D-ribose 5-phosphate from D-ribulose 5-phosphate (non-oxidative stage): step 1/1. Functionally, catalyzes the reversible conversion of ribose-5-phosphate to ribulose 5-phosphate. The sequence is that of Ribose-5-phosphate isomerase A from Burkholderia ambifaria (strain MC40-6).